A 341-amino-acid polypeptide reads, in one-letter code: UDP-3-O-(3-hydroxymyristoyl)glucosamine N-acyltransferase (341 aa).

Residue histidine 239 is the Proton acceptor of the active site.

It belongs to the transferase hexapeptide repeat family. LpxD subfamily. Homotrimer.

It carries out the reaction a UDP-3-O-[(3R)-3-hydroxyacyl]-alpha-D-glucosamine + a (3R)-hydroxyacyl-[ACP] = a UDP-2-N,3-O-bis[(3R)-3-hydroxyacyl]-alpha-D-glucosamine + holo-[ACP] + H(+). It catalyses the reaction UDP-3-O-[(3R)-3-hydroxytetradecanoyl]-alpha-D-glucosamine + (3R)-hydroxytetradecanoyl-[ACP] = UDP-2-N,3-O-bis[(3R)-3-hydroxytetradecanoyl]-alpha-D-glucosamine + holo-[ACP] + H(+). Its pathway is glycolipid biosynthesis; lipid IV(A) biosynthesis; lipid IV(A) from (3R)-3-hydroxytetradecanoyl-[acyl-carrier-protein] and UDP-N-acetyl-alpha-D-glucosamine: step 3/6. Catalyzes the N-acylation of UDP-3-O-(hydroxytetradecanoyl)glucosamine using 3-hydroxytetradecanoyl-ACP as the acyl donor. Is involved in the biosynthesis of lipid A, a phosphorylated glycolipid that anchors the lipopolysaccharide to the outer membrane of the cell. The polypeptide is UDP-3-O-(3-hydroxymyristoyl)glucosamine N-acyltransferase (Escherichia coli (strain UTI89 / UPEC)).